Reading from the N-terminus, the 271-residue chain is Probable short-chain type dehydrogenase/reductase VdlC (271 aa).

An NAD(+)-binding site is contributed by 1 to 25 (MAVITGASSGIGLECVLMLLNQGYK). Ser-129 serves as a coordination point for substrate. Tyr-142 (proton acceptor) is an active-site residue.

Belongs to the short-chain dehydrogenases/reductases (SDR) family.

This Helicobacter pylori (strain J99 / ATCC 700824) (Campylobacter pylori J99) protein is Probable short-chain type dehydrogenase/reductase VdlC (vdlC).